Reading from the N-terminus, the 571-residue chain is Sulfite reductase [NADPH] hemoprotein beta-component (571 aa).

Residues C435, C441, C480, and C484 each coordinate [4Fe-4S] cluster. Siroheme is bound at residue C484.

Belongs to the nitrite and sulfite reductase 4Fe-4S domain family. Alpha(8)-beta(8). The alpha component is a flavoprotein, the beta component is a hemoprotein. Siroheme is required as a cofactor. [4Fe-4S] cluster serves as cofactor.

The enzyme catalyses hydrogen sulfide + 3 NADP(+) + 3 H2O = sulfite + 3 NADPH + 4 H(+). It functions in the pathway sulfur metabolism; hydrogen sulfide biosynthesis; hydrogen sulfide from sulfite (NADPH route): step 1/1. Component of the sulfite reductase complex that catalyzes the 6-electron reduction of sulfite to sulfide. This is one of several activities required for the biosynthesis of L-cysteine from sulfate. The protein is Sulfite reductase [NADPH] hemoprotein beta-component of Dickeya chrysanthemi (strain Ech1591) (Dickeya zeae (strain Ech1591)).